The sequence spans 175 residues: Major oleosin NAP-II (175 aa).

Residues 1 to 47 (RRDQYPRDRDQYSMIGRDRDKYSMIGRDRDQYNMYGRDYSKSRQIAK) form a polar region. 2 repeats span residues 17 to 26 (RDRDKYSMIG) and 27 to 36 (RDRDQYNMYG). The tract at residues 48–119 (AVTAVTAGGS…AAITVFSWIY (72 aa)) is hydrophobic. 3 helical membrane passes run 56–76 (GSLL…LTVA), 78–98 (PLLV…ALLI), and 99–119 (TGFL…SWIY). The interval 151 to 175 (AQYYGQQQTGGEDDRDRTRGTQHTT) is disordered.

This sequence belongs to the oleosin family.

The protein localises to the lipid droplet. The protein resides in the membrane. May have a structural role to stabilize the lipid body during desiccation of the seed by preventing coalescence of the oil. Probably interacts with both lipid and phospholipid moieties of lipid bodies. May also provide recognition signals for specific lipase anchorage in lipolysis during seedling growth. The chain is Major oleosin NAP-II from Brassica napus (Rape).